Here is a 285-residue protein sequence, read N- to C-terminus: Kanamycin B dioxygenase (285 aa).

The protein belongs to the PhyH family. The cofactor is Fe cation.

The enzyme catalyses kanamycin B + 2-oxoglutarate + O2 = 2'-dehydrokanamycin A + succinate + NH4(+) + CO2. It functions in the pathway antibiotic biosynthesis; kanamycin biosynthesis. Functionally, mediates the conversion of kanamycin B into 2'-dehydrokanamycin A during the transformation of kanamycin B to kanamycin A. The protein is Kanamycin B dioxygenase (kanJ) of Streptomyces kanamyceticus.